We begin with the raw amino-acid sequence, 257 residues long: Large ribosomal subunit protein uL2 (257 aa).

The interval valine 207 to arginine 226 is disordered.

The protein belongs to the universal ribosomal protein uL2 family. In terms of assembly, component of the large ribosomal subunit.

The protein localises to the cytoplasm. Component of the large ribosomal subunit. The ribosome is a large ribonucleoprotein complex responsible for the synthesis of proteins in the cell. This chain is Large ribosomal subunit protein uL2 (rpl8), found in Ictalurus punctatus (Channel catfish).